Consider the following 668-residue polypeptide: Phosphoglycerate transport system sensor protein PgtB (668 aa).

A run of 2 helical transmembrane segments spans residues 20–40 (GAFLTGALLTLIVSMVSLYSW) and 342–362 (LILVATLLALLLAWGLNHYFI). The region spanning 364–416 (SRLVKRFTALNQAVVQIGLGRTDSTIPVYGRDELGRIARLLRHTLGQLNMQRR) is the HAMP domain. Residues 454–663 (TLAHEINQPL…CVVLQFSVTD (210 aa)) form the Histidine kinase domain. His457 carries the phosphohistidine; by autocatalysis modification.

Its subcellular location is the cell inner membrane. It carries out the reaction ATP + protein L-histidine = ADP + protein N-phospho-L-histidine.. Its function is as follows. Member of the two-component regulatory system PgtB/PgtA that regulates the inducible phosphoglycerate transport system. Activates PgtA by phosphorylation. The protein is Phosphoglycerate transport system sensor protein PgtB (pgtB) of Salmonella typhimurium (strain LT2 / SGSC1412 / ATCC 700720).